The following is a 1039-amino-acid chain: Probable calcium-transporting ATPase 9, plasma membrane-type (1039 aa).

Over 1 to 175 (MEKLDRYLQE…FVWDALQDMT (175 aa)) the chain is Cytoplasmic. A run of 2 helical transmembrane segments spans residues 176 to 196 (LIIL…TEGW) and 199 to 219 (GMYD…VTAV). Residues 220–250 (SDYKQSLQFKELDNEKKKIFIHVTRDGRRQK) lie on the Cytoplasmic side of the membrane. 2 helical membrane-spanning segments follow: residues 251-271 (ISIY…DQVP) and 353-373 (VATI…LVLL). The Cytoplasmic portion of the chain corresponds to 374 to 406 (VRFLIDKGMTVGLLKWYSTDALTIVNYFATAVT). The helical transmembrane segment at 407–427 (IIVVAVPEGLPLAVTLSLAFA) threads the bilayer. The 4-aspartylphosphate intermediate role is filled by aspartate 456. Positions 758 and 762 each coordinate Mg(2+). Residues 825 to 845 (IVALVINFVSACIIGSAPLTA) form a helical membrane-spanning segment. The Cytoplasmic portion of the chain corresponds to 846 to 847 (VQ). Transmembrane regions (helical) follow at residues 848–868 (LLWV…TEPP) and 892–912 (NIMG…FGGE). Residues 913-960 (RLLNIKGADSKSIINTLIFNSFVFCQVFNEINSREMQKINVFRGIISN) lie on the Cytoplasmic side of the membrane. Helical transmembrane passes span 961-981 (WIFI…IEFL) and 995-1015 (WLLS…LKCI). At 1016–1039 (PVGSGETSATPNGYRPLANGPDDI) the chain is on the cytoplasmic side.

Belongs to the cation transport ATPase (P-type) (TC 3.A.3) family. Type IIB subfamily.

It is found in the membrane. It catalyses the reaction Ca(2+)(in) + ATP + H2O = Ca(2+)(out) + ADP + phosphate + H(+). With respect to regulation, activated by calmodulin. In terms of biological role, this magnesium-dependent enzyme catalyzes the hydrolysis of ATP coupled with the translocation of calcium from the cytosol out of the cell, into the endoplasmic reticulum, or into organelles. The protein is Probable calcium-transporting ATPase 9, plasma membrane-type of Oryza sativa subsp. japonica (Rice).